The primary structure comprises 196 residues: MMIDIPEDKLVAGVDEVGRGPLVGDVVTAAVILDPANPITGLADSKKLSEKKRLALFDEIKQKALAWAIGRASPEEIDELNILHATMLAMQRAVAGLSITPELVFIDGNRCPSLPMEARAVVKGDSLVAAISAASILAKVTRDAEMTELDSRHPEYGFARHKGYPTPEHLAILAERGPLPAYRKSFKPVRHALGIE.

Residues 9 to 196 enclose the RNase H type-2 domain; the sequence is KLVAGVDEVG…KPVRHALGIE (188 aa). 3 residues coordinate a divalent metal cation: Asp15, Glu16, and Asp107.

The protein belongs to the RNase HII family. Mn(2+) serves as cofactor. Mg(2+) is required as a cofactor.

The protein resides in the cytoplasm. The enzyme catalyses Endonucleolytic cleavage to 5'-phosphomonoester.. Functionally, endonuclease that specifically degrades the RNA of RNA-DNA hybrids. The polypeptide is Ribonuclease HII (Aeromonas salmonicida (strain A449)).